Here is a 177-residue protein sequence, read N- to C-terminus: Matrix protein (177 aa).

Homomultimer. Interacts with nucleoprotein and with the cytoplasmic domain of glycoprotein.

It localises to the virion membrane. Its subcellular location is the host endomembrane system. Functionally, plays a major role in assembly and budding of virion. Completely covers the ribonucleoprotein coil and keep it in condensed bullet-shaped form. Inhibits viral transcription and stimulates replication. In Lettuce necrotic yellows virus (isolate 318) (LNYV), this protein is Matrix protein (M).